Reading from the N-terminus, the 686-residue chain is Methionine--tRNA ligase (686 aa).

The 'HIGH' region signature appears at 22-32 (PYANGPIHLGH). The Zn(2+) site is built by Cys153, Cys156, Cys166, and Cys169. Positions 337–341 (KMSKS) match the 'KMSKS' region motif. Residue Lys340 coordinates ATP. The interval 547–573 (MLEDSKESTPAPAAAKPKKAATQKADA) is disordered. In terms of domain architecture, tRNA-binding spans 584 to 686 (DFLKVKLRVA…SGAEPGMEVR (103 aa)).

Belongs to the class-I aminoacyl-tRNA synthetase family. MetG type 1 subfamily. Homodimer. Requires Zn(2+) as cofactor.

The protein localises to the cytoplasm. It carries out the reaction tRNA(Met) + L-methionine + ATP = L-methionyl-tRNA(Met) + AMP + diphosphate. In terms of biological role, is required not only for elongation of protein synthesis but also for the initiation of all mRNA translation through initiator tRNA(fMet) aminoacylation. The chain is Methionine--tRNA ligase from Alcanivorax borkumensis (strain ATCC 700651 / DSM 11573 / NCIMB 13689 / SK2).